The sequence spans 493 residues: Cysteine sulfinic acid decarboxylase (493 aa).

Lys-305 bears the N6-(pyridoxal phosphate)lysine mark.

This sequence belongs to the group II decarboxylase family. In terms of assembly, homodimer. Pyridoxal 5'-phosphate serves as cofactor. In terms of tissue distribution, expressed in liver and brain. Also expressed in both astrocytes and neurons, but lower levels are expressed in astrocytes.

The enzyme catalyses L-aspartate + H(+) = beta-alanine + CO2. The catalysed reaction is 3-sulfino-L-alanine + H(+) = hypotaurine + CO2. It carries out the reaction L-cysteate + H(+) = taurine + CO2. The protein operates within organosulfur biosynthesis; taurine biosynthesis; hypotaurine from L-cysteine: step 2/2. Functionally, catalyzes the decarboxylation of L-aspartate, 3-sulfino-L-alanine (cysteine sulfinic acid), and L-cysteate to beta-alanine, hypotaurine and taurine, respectively. The preferred substrate is 3-sulfino-L-alanine. Does not exhibit any decarboxylation activity toward glutamate. This is Cysteine sulfinic acid decarboxylase (CSAD) from Homo sapiens (Human).